The following is a 414-amino-acid chain: Esterase FrsA (414 aa).

Belongs to the FrsA family.

It catalyses the reaction a carboxylic ester + H2O = an alcohol + a carboxylate + H(+). Functionally, catalyzes the hydrolysis of esters. The polypeptide is Esterase FrsA (Escherichia coli O45:K1 (strain S88 / ExPEC)).